We begin with the raw amino-acid sequence, 69 residues long: MKTVLIVLLRFYRYAISPMLGRNCRFHPSCSEYAIEAVQRHGAVRGAWLAARRVARCHPFHPGGYDPVP.

This sequence belongs to the UPF0161 family.

It is found in the cell inner membrane. In terms of biological role, could be involved in insertion of integral membrane proteins into the membrane. This Azoarcus sp. (strain BH72) protein is Putative membrane protein insertion efficiency factor.